The following is a 432-amino-acid chain: Glutamyl-tRNA reductase (432 aa).

Substrate is bound by residues 49-52 (TCNR), S107, 112-114 (ETQ), and Q118. C50 serves as the catalytic Nucleophile. Residue 186 to 191 (GAGEMG) participates in NADP(+) binding.

The protein belongs to the glutamyl-tRNA reductase family. As to quaternary structure, homodimer.

It carries out the reaction (S)-4-amino-5-oxopentanoate + tRNA(Glu) + NADP(+) = L-glutamyl-tRNA(Glu) + NADPH + H(+). The protein operates within porphyrin-containing compound metabolism; protoporphyrin-IX biosynthesis; 5-aminolevulinate from L-glutamyl-tRNA(Glu): step 1/2. In terms of biological role, catalyzes the NADPH-dependent reduction of glutamyl-tRNA(Glu) to glutamate 1-semialdehyde (GSA). This chain is Glutamyl-tRNA reductase, found in Campylobacter jejuni (strain RM1221).